We begin with the raw amino-acid sequence, 151 residues long: Nucleoside diphosphate kinase (151 aa).

The ATP site is built by K11, F59, R87, T93, R104, and N114. H117 serves as the catalytic Pros-phosphohistidine intermediate.

This sequence belongs to the NDK family. As to quaternary structure, homotetramer. It depends on Mg(2+) as a cofactor.

The protein localises to the cytoplasm. It catalyses the reaction a 2'-deoxyribonucleoside 5'-diphosphate + ATP = a 2'-deoxyribonucleoside 5'-triphosphate + ADP. It carries out the reaction a ribonucleoside 5'-diphosphate + ATP = a ribonucleoside 5'-triphosphate + ADP. Functionally, major role in the synthesis of nucleoside triphosphates other than ATP. The ATP gamma phosphate is transferred to the NDP beta phosphate via a ping-pong mechanism, using a phosphorylated active-site intermediate. The polypeptide is Nucleoside diphosphate kinase (Prochlorococcus marinus (strain NATL1A)).